The primary structure comprises 328 residues: Glycerol-3-phosphate dehydrogenase [NAD(P)+] (328 aa).

NADPH is bound by residues tryptophan 15, arginine 35, and lysine 108. Residues lysine 108, glycine 136, and serine 138 each coordinate sn-glycerol 3-phosphate. An NADPH-binding site is contributed by alanine 140. Residues lysine 191, aspartate 244, serine 254, arginine 255, and asparagine 256 each contribute to the sn-glycerol 3-phosphate site. Residue lysine 191 is the Proton acceptor of the active site. Residue arginine 255 coordinates NADPH. Residues leucine 275 and glutamate 277 each contribute to the NADPH site.

Belongs to the NAD-dependent glycerol-3-phosphate dehydrogenase family.

It is found in the cytoplasm. It carries out the reaction sn-glycerol 3-phosphate + NAD(+) = dihydroxyacetone phosphate + NADH + H(+). It catalyses the reaction sn-glycerol 3-phosphate + NADP(+) = dihydroxyacetone phosphate + NADPH + H(+). The protein operates within membrane lipid metabolism; glycerophospholipid metabolism. Catalyzes the reduction of the glycolytic intermediate dihydroxyacetone phosphate (DHAP) to sn-glycerol 3-phosphate (G3P), the key precursor for phospholipid synthesis. The chain is Glycerol-3-phosphate dehydrogenase [NAD(P)+] from Azorhizobium caulinodans (strain ATCC 43989 / DSM 5975 / JCM 20966 / LMG 6465 / NBRC 14845 / NCIMB 13405 / ORS 571).